The primary structure comprises 173 residues: Thiol-disulfide oxidoreductase ResA (173 aa).

The helical; Signal-anchor for type II membrane protein transmembrane segment at 10–29 (VIILLILCGAVGFTLYQGYF) threads the bilayer. Residues 35-173 (MEIGKEAPNF…LEEYLKKITP (139 aa)) enclose the Thioredoxin domain. C73 and C76 are oxidised to a cystine.

Belongs to the thioredoxin family. ResA subfamily.

Its subcellular location is the cell membrane. Its pathway is protein modification; cytochrome c assembly. In terms of biological role, thiol-disulfide oxidoreductase which is required in disulfide reduction during c-type cytochrome synthesis. May accept reducing equivalents from CcdA, leading to breakage of disulfide bonds in apocytochrome c; following this reduction heme can be covalently attached. This is Thiol-disulfide oxidoreductase ResA from Bacillus thuringiensis subsp. konkukian (strain 97-27).